We begin with the raw amino-acid sequence, 1051 residues long: Kinesin-like protein KIN-4B (1051 aa).

The segment at 1–21 is disordered; it reads MESHSSLSSSSSSSPPSSLSS. Residues 25–380 form the Kinesin motor domain; sequence CVKVAVNVRP…LKYANRARNI (356 aa). An ATP-binding site is contributed by 104–111; that stretch reads GQTGSGKT. 2 coiled-coil regions span residues 414 to 448 and 540 to 644; these read ATSS…RSKR and RQHF…KMKQ. A compositionally biased stretch (low complexity) spans 916–925; the sequence is SSSYSGSSRS. 2 disordered regions span residues 916–946 and 1029–1051; these read SSSY…SSTY and MSKS…FQGA.

It belongs to the TRAFAC class myosin-kinesin ATPase superfamily. Kinesin family. KIN-4 subfamily. Homodimer.

Its function is as follows. Kinesin-like motor protein involved in the control of the oriented deposition of cellulose microfibrils. This is Kinesin-like protein KIN-4B from Arabidopsis thaliana (Mouse-ear cress).